The following is a 255-amino-acid chain: UPF0246 protein BVU_0413 (255 aa).

It belongs to the UPF0246 family.

The protein is UPF0246 protein BVU_0413 of Phocaeicola vulgatus (strain ATCC 8482 / DSM 1447 / JCM 5826 / CCUG 4940 / NBRC 14291 / NCTC 11154) (Bacteroides vulgatus).